The following is a 625-amino-acid chain: Probable potassium transport system protein Kup 2 (625 aa).

12 helical membrane passes run 15 to 35 (LSFAALGVVFGDIGTSPLYAF), 52 to 72 (ILSLIFWSLIIIVSIKYLVIV), 98 to 118 (GGWLLFITLVGIGLIIGDGML), 134 to 154 (LSPNLAKYVLPVTLIILFFLF), 164 to 184 (IGVYFAPVMLVWFITIGILGF), 212 to 232 (LALFILGGVFLVMTGGEALFA), 246 to 266 (WFAVALPALLLCYFGQGALVL), 284 to 304 (FLPVMIILATLATIIASQAII), 336 to 356 (VYLPLINFILALGTCSLVVIF), 365 to 385 (AYGIAVNLDMLITTVLVGIIA), 394 to 414 (FKILIFLLILIIELAFFAGNI), and 417 to 437 (LLTGGWIPILIAFLGFVVMYT).

This sequence belongs to the HAK/KUP transporter (TC 2.A.72) family.

It is found in the cell inner membrane. The enzyme catalyses K(+)(in) + H(+)(in) = K(+)(out) + H(+)(out). Functionally, transport of potassium into the cell. Likely operates as a K(+):H(+) symporter. The polypeptide is Probable potassium transport system protein Kup 2 (Legionella pneumophila (strain Corby)).